The following is a 464-amino-acid chain: Cysteine--tRNA ligase (464 aa).

C32 is a binding site for Zn(2+). Residues 34–44 (VTVYDDCHIGH) carry the 'HIGH' region motif. Zn(2+) is bound by residues C213, H238, and E242. The 'KMSKS' region motif lies at 270–274 (KMSKS). K273 is a binding site for ATP.

The protein belongs to the class-I aminoacyl-tRNA synthetase family. As to quaternary structure, monomer. Zn(2+) serves as cofactor.

It is found in the cytoplasm. The enzyme catalyses tRNA(Cys) + L-cysteine + ATP = L-cysteinyl-tRNA(Cys) + AMP + diphosphate. The polypeptide is Cysteine--tRNA ligase (Francisella tularensis subsp. tularensis (strain SCHU S4 / Schu 4)).